The sequence spans 233 residues: UPF0173 metal-dependent hydrolase Igni_1254 (233 aa).

It belongs to the UPF0173 family.

This chain is UPF0173 metal-dependent hydrolase Igni_1254, found in Ignicoccus hospitalis (strain KIN4/I / DSM 18386 / JCM 14125).